Here is a 100-residue protein sequence, read N- to C-terminus: Elevenin (100 aa).

Residues 1 to 24 (MALSQKALLVLVLSMLLTASDSWA) form the signal peptide. Cys-29 and Cys-38 are oxidised to a cystine. The propeptide occupies 44–100 (KRGGDSLSVGGSAELDDTLTDPFLKSEEPKEWRELTRLSRVLQTFLSHPTGEMEQHD).

This sequence belongs to the elevenin family. In terms of assembly, monomer. As to expression, expressed by the venom duct.

The protein resides in the secreted. May mimic the function of prey elevenin neuropeptide. In vivo, intracranial injection in mice induces hyperactivity. This chain is Elevenin, found in Conus ammiralis (Admiral cone).